The sequence spans 419 residues: Serine--tRNA ligase (419 aa).

An L-serine-binding site is contributed by 226 to 228 (TSE). ATP is bound by residues 257-259 (RRE) and valine 273. Glutamate 280 serves as a coordination point for L-serine. 344–347 (ELTS) contacts ATP. An L-serine-binding site is contributed by threonine 379.

It belongs to the class-II aminoacyl-tRNA synthetase family. Type-1 seryl-tRNA synthetase subfamily. As to quaternary structure, homodimer. The tRNA molecule binds across the dimer.

It localises to the cytoplasm. It carries out the reaction tRNA(Ser) + L-serine + ATP = L-seryl-tRNA(Ser) + AMP + diphosphate + H(+). The enzyme catalyses tRNA(Sec) + L-serine + ATP = L-seryl-tRNA(Sec) + AMP + diphosphate + H(+). It participates in aminoacyl-tRNA biosynthesis; selenocysteinyl-tRNA(Sec) biosynthesis; L-seryl-tRNA(Sec) from L-serine and tRNA(Sec): step 1/1. Its function is as follows. Catalyzes the attachment of serine to tRNA(Ser). Is also able to aminoacylate tRNA(Sec) with serine, to form the misacylated tRNA L-seryl-tRNA(Sec), which will be further converted into selenocysteinyl-tRNA(Sec). The sequence is that of Serine--tRNA ligase from Mycobacterium marinum (strain ATCC BAA-535 / M).